A 384-amino-acid chain; its full sequence is Putative glycosyltransferase EpsF (384 aa).

It belongs to the glycosyltransferase group 1 family. Glycosyltransferase 4 subfamily.

Functionally, may be involved in the production of the exopolysaccharide (EPS) component of the extracellular matrix during biofilm formation. EPS is responsible for the adhesion of chains of cells into bundles. Required for biofilm maintenance. The protein is Putative glycosyltransferase EpsF (epsF) of Bacillus subtilis (strain 168).